Consider the following 391-residue polypeptide: MGYPEVERREPLPAAAPRERGSQGCGCRGAPARAGEGNSCRLFLGFFGLSLALHLLTLCCYLELRSELRRERGAESRFSGPGTPGTSGTLSSPGGLDPNGPITRHFGQRSPQQQPLEPGETTLPPDSQDGHQMALVNFFIPKEKSYSEEESRRVRRNKRSKSSEGADGPVKNKKKGKKAGPPGPNGPPGPPGPPGPQGPPGIPGIPGIPGTTVMGPPGPPGPPGPQGPPGLQGPSGAADKAGTRENQPAVVHLQGQGSAIQVKNDLSGGVLNDWSRITMNPKVFKLHPRSGELEVLVDGTYFIYSQVEVYYINFTDFASYEVVVDEKPFLQCTRSIETGKTNYNTCYTAGVCLLKARQKIAVKMVHADISINMSKHTTFFGAIRLGEAPAS.

Residues 1–21 show a composition bias toward basic and acidic residues; it reads MGYPEVERREPLPAAAPRERG. Residues 1–28 form a disordered region; the sequence is MGYPEVERREPLPAAAPRERGSQGCGCR. At 1–41 the chain is on the cytoplasmic side; it reads MGYPEVERREPLPAAAPRERGSQGCGCRGAPARAGEGNSCR. A helical; Signal-anchor for type II membrane protein membrane pass occupies residues 42-62; it reads LFLGFFGLSLALHLLTLCCYL. Over 63-391 the chain is Extracellular; the sequence is ELRSELRRER…AIRLGEAPAS (329 aa). Disordered regions lie at residues 73–130 and 145–245; these read GAES…SQDG and SYSE…GTRE. Positions 76 to 96 are enriched in low complexity; it reads SRFSGPGTPGTSGTLSSPGGL. Residues 180-229 form the Collagen-like domain; that stretch reads GPPGPNGPPGPPGPPGPQGPPGIPGIPGIPGTTVMGPPGPPGPPGPQGPP. 2 stretches are compositionally biased toward pro residues: residues 181 to 203 and 216 to 228; these read PPGP…PGIP and PPGP…PQGP. The 137-residue stretch at 249-385 folds into the THD domain; it reads AVVHLQGQGS…HTTFFGAIRL (137 aa). N-linked (GlcNAc...) asparagine glycosylation occurs at Asn313. A disulfide bridge links Cys332 with Cys346. An N-linked (GlcNAc...) asparagine glycan is attached at Asn372.

It belongs to the tumor necrosis factor family. In terms of assembly, homotrimer. The homotrimers may then dimerize and form higher-order oligomers. Post-translationally, N-glycosylated. In terms of processing, processing by furin produces a secreted form.

The protein localises to the cell membrane. It localises to the secreted. Functionally, cytokine which is involved in epithelial-mesenchymal signaling during morphogenesis of ectodermal organs. Functions as a ligand activating the DEATH-domain containing receptors EDAR and EDA2R. Isoform A1 binds only to the receptor EDAR, while isoform A2 binds exclusively to the receptor EDA2R. May also play a role in cell adhesion. In terms of biological role, isoform A1 binds only to the receptor EDAR, while isoform A2 binds exclusively to the receptor EDA2R. Its function is as follows. Isoform A2 binds exclusively to the receptor EDA2R. In Bos taurus (Bovine), this protein is Ectodysplasin-A (EDA).